Consider the following 506-residue polypeptide: 2-isopropylmalate synthase (506 aa).

Residues 4-266 (ILFMDTTLRD…EPSMTLKEIK (263 aa)) enclose the Pyruvate carboxyltransferase domain. Mn(2+)-binding residues include Asp-13, His-201, His-203, and Asn-237. The segment at 390–506 (NITQLQVHFV…KLKSFIQLVK (117 aa)) is regulatory domain.

This sequence belongs to the alpha-IPM synthase/homocitrate synthase family. LeuA type 1 subfamily. Homodimer. Requires Mn(2+) as cofactor.

The protein resides in the cytoplasm. The enzyme catalyses 3-methyl-2-oxobutanoate + acetyl-CoA + H2O = (2S)-2-isopropylmalate + CoA + H(+). It functions in the pathway amino-acid biosynthesis; L-leucine biosynthesis; L-leucine from 3-methyl-2-oxobutanoate: step 1/4. Catalyzes the condensation of the acetyl group of acetyl-CoA with 3-methyl-2-oxobutanoate (2-ketoisovalerate) to form 3-carboxy-3-hydroxy-4-methylpentanoate (2-isopropylmalate). The chain is 2-isopropylmalate synthase from Bacillus cereus (strain ATCC 10987 / NRS 248).